The primary structure comprises 1426 residues: Epidermal growth factor receptor (1426 aa).

The first 30 residues, 1–30 (MLLRRRNGPCPFPLLLLLLAHCICIWPASA), serve as a signal peptide directing secretion. At 31-868 (ARDRYARQNN…SKITANLDVN (838 aa)) the chain is on the extracellular side. N128, N241, N419, N443, N482, N569, N599, N617, N816, N823, and N828 each carry an N-linked (GlcNAc...) asparagine glycan. A helical transmembrane segment spans residues 869-889 (MIFIITGAVLVPTICILCVVT). Over 890–1426 (YICRQKQKAK…HRNRNTETRV (537 aa)) the chain is Cytoplasmic. Position 902 is a phosphothreonine; by PKC (T902). Residues 938-1198 (LRKGGVLGMG…QLTTVFAEFA (261 aa)) form the Protein kinase domain. Residues 944–952 (LGMGAFGRV) and K971 contribute to the ATP site. The active-site Proton acceptor is D1063. Residues 1232 to 1297 (PTTDGSEAIA…DSSAREVGVG (66 aa)) form a disordered region. A compositionally biased stretch (basic and acidic residues) spans 1257–1276 (HRTDCTDEMPKLNRYCKDPS). Y1310 is subject to Phosphotyrosine; by autocatalysis.

This sequence belongs to the protein kinase superfamily. Tyr protein kinase family. EGF receptor subfamily. As to quaternary structure, homodimer. Binding of the ligand spitz triggers homodimerization of the receptor however, it is able to form dimers, albeit weakly, in the absence of spitz. Interacts (when phosphorylated on tyrosine residues) with Vav (via SH2 domain). Interacts (when ubiquitinated) with Graf. May interact (when phosphorylated) with EGFRAP (via SH2 domain). In terms of processing, ubiquitination by Cbl in response to high spi, promotes its interaction with Graf and thus facilitates its GPI-enriched endocytic compartment (GEEC) mediated endocytosis and its subsequent degradation. Ubiquitously expressed in embryos. In larvae, uniform expression is seen in wing disks, genital disk, anlagen of testis and ovary, and brain cortex. In eye-antenna disk, highest expression is anterior to morphogenetic furrow, levels remain high in photoreceptor precursor cells. This pattern is reversed in posterior eye disk. In adults expression is high in brain cortex and thoracic and abdominal ganglia.

The protein resides in the membrane. It catalyses the reaction L-tyrosyl-[protein] + ATP = O-phospho-L-tyrosyl-[protein] + ADP + H(+). Functionally, receptor tyrosine kinase, binding ligands of the EGF family and activating several signaling cascades to convert extracellular cues into appropriate cellular responses. Known ligands include spitz, gurken, vein and giant-lens. Transduces the signal through the ras-raf-MAPK pathway. Critical for the proliferation of imaginal tissues, and for the determination of both the antero-posterior and dorso-ventral polarities of the oocyte. In the embryo, plays a role in the establishment of ventral cell fates, maintenance of amnioserosa and ventral neuroectodermal cells, germ band retraction, cell fate specification in the central nervous system, and production and repair of the cuticle. During dorsal closure (DC) functions with the dpp- and ACK-signaling pathways to regulate expression of the myosin zip in the embryonic epidermis and amnioserosa (AS), and thus coordinate the progression of epidermal cell shape changes required for correct DC. In the embryonic epidermis, functions by negatively regulating dpp and consequently the dpp-dependent expression of the myosin zip. In the AS, negatively regulates the production/ and or secretion of a diffusible signal which, is produced by the ACK-signaling pathway, and acts in the AS and epidermal cells to promote zip expression. Also required in the AS to inhibit or delay apoptosis, and consequently slow the rate of DC. Therefore functions at multiple levels to negatively regulate morphogenesis during DC, suggesting that it acts as a general brake mechanism for adjusting the rate of dorsal closure to ensure that closure proceeds smoothly and without loss of epidermal integrity. During oogenesis, one of two tyrosine kinase chemoattractant receptors (Egfr and Pvr), that function in the border cells (BC) to detect guidance cues from the oocyte and transduce this information to the guidance pathway that regulate the collective migration of the BC cluster through the nurse cells to the oocyte. The sequence is that of Epidermal growth factor receptor (Egfr) from Drosophila melanogaster (Fruit fly).